Here is a 27-residue protein sequence, read N- to C-terminus: Pregnancy-associated glycoprotein 55 (27 aa).

This sequence belongs to the peptidase A1 family. In terms of processing, glycosylated. As to expression, placenta.

This is Pregnancy-associated glycoprotein 55 (PAG55) from Capra hircus (Goat).